Here is a 946-residue protein sequence, read N- to C-terminus: Aminopeptidase N (946 aa).

Positions 1–15 are cleaved as a signal peptide; that stretch reads MRLLICLTLLGLVCG. N-linked (GlcNAc...) asparagine glycosylation occurs at Asn-60. 308-312 serves as a coordination point for substrate; sequence GAMEN. His-344 is a binding site for Zn(2+). The Proton acceptor role is filled by Glu-345. Positions 348 and 367 each coordinate Zn(2+). 2 N-linked (GlcNAc...) asparagine glycosylation sites follow: Asn-550 and Asn-605. 2 cysteine pairs are disulfide-bonded: Cys-715–Cys-722 and Cys-751–Cys-787.

Belongs to the peptidase M1 family. Zn(2+) serves as cofactor.

The protein resides in the cell membrane. It carries out the reaction Release of an N-terminal amino acid, Xaa-|-Yaa- from a peptide, amide or arylamide. Xaa is preferably Ala, but may be most amino acids including Pro (slow action). When a terminal hydrophobic residue is followed by a prolyl residue, the two may be released as an intact Xaa-Pro dipeptide.. The sequence is that of Aminopeptidase N (APN1) from Plutella xylostella (Diamondback moth).